The chain runs to 84 residues: Small ribosomal subunit protein uS17 (84 aa).

The protein belongs to the universal ribosomal protein uS17 family. Part of the 30S ribosomal subunit.

One of the primary rRNA binding proteins, it binds specifically to the 5'-end of 16S ribosomal RNA. This is Small ribosomal subunit protein uS17 from Moorella thermoacetica (strain ATCC 39073 / JCM 9320).